Reading from the N-terminus, the 800-residue chain is DNA topoisomerase 4 subunit A (800 aa).

The region spanning 31 to 495 (LPDVRDGLKP…EIEEIKIDKE (465 aa)) is the Topo IIA-type catalytic domain. Tyr119 (O-(5'-phospho-DNA)-tyrosine intermediate) is an active-site residue.

Belongs to the type II topoisomerase GyrA/ParC subunit family. ParC type 2 subfamily. Heterotetramer composed of ParC and ParE.

The protein localises to the cell membrane. The enzyme catalyses ATP-dependent breakage, passage and rejoining of double-stranded DNA.. Functionally, topoisomerase IV is essential for chromosome segregation. It relaxes supercoiled DNA. Performs the decatenation events required during the replication of a circular DNA molecule. This Staphylococcus aureus (strain NCTC 8325 / PS 47) protein is DNA topoisomerase 4 subunit A.